The following is a 391-amino-acid chain: Putative penicillin-binding protein PbpX (391 aa).

Residues 21 to 40 (GKLLFGLLAVMVCITIWNAL) traverse the membrane as a helical segment. Residues 44–76 (SEENEPSQETAAVSNTDQKKEVKKKTAKKSEEQ) are disordered. Polar residues predominate over residues 50–59 (SQETAAVSNT).

This sequence belongs to the beta-lactamase family.

Its subcellular location is the cell membrane. In Bacillus subtilis (strain 168), this protein is Putative penicillin-binding protein PbpX (pbpX).